A 160-amino-acid chain; its full sequence is Ribosomal RNA large subunit methyltransferase H (160 aa).

S-adenosyl-L-methionine is bound by residues Leu77, Gly109, and 128–133 (LSNLTF).

The protein belongs to the RNA methyltransferase RlmH family. Homodimer.

The protein localises to the cytoplasm. The catalysed reaction is pseudouridine(1915) in 23S rRNA + S-adenosyl-L-methionine = N(3)-methylpseudouridine(1915) in 23S rRNA + S-adenosyl-L-homocysteine + H(+). Its function is as follows. Specifically methylates the pseudouridine at position 1915 (m3Psi1915) in 23S rRNA. The protein is Ribosomal RNA large subunit methyltransferase H of Desulforamulus reducens (strain ATCC BAA-1160 / DSM 100696 / MI-1) (Desulfotomaculum reducens).